The chain runs to 388 residues: Staphopain A (388 aa).

The first 25 residues, 1 to 25, serve as a signal peptide directing secretion; the sequence is MKRNFPKLIALSLIFSLSVTPIANA. Positions 26–214 are excised as a propeptide; the sequence is ESNSNIKAKD…TSQFKSNNYT (189 aa). Catalysis depends on residues cysteine 238, histidine 334, and asparagine 355.

Belongs to the peptidase C47 family. In terms of assembly, in the cytoplasm, prematurely activated/folded ScpA forms a stable non-covalent complex with ScpB. Cleavage leads to the activation of ScpA probably by an auto-catalytic manner.

It is found in the secreted. The enzyme catalyses Broad endopeptidase action on proteins including elastin, but rather limited hydrolysis of small-molecule substrates. Assays are conveniently made with hemoglobin, casein or Z-Phe-Arg-NHMec as substrate.. Its activity is regulated as follows. Prematurely activated/folded staphopain A is inhibited by staphostatin A (ScpB), which is probably required to protect staphylococcal cytoplasmic proteins from degradation by ScpA. Functionally, cysteine protease that plays an important role in the inhibition of host innate immune response. Cleaves host elastins found in connective tissues, pulmonary surfactant protein A in the lungs, and the chemokine receptor CXCR2 on leukocytes. Proteolytic cleavage of surfactant protein A impairs bacterial phagocytosis by neutrophils while CXCR2 degradation blocks neutrophil activation and chemotaxis. Additionally, promotes vascular leakage by activating the plasma kallikerin/kinin system, resulting in hypotension. This chain is Staphopain A (sspP), found in Staphylococcus aureus (strain COL).